We begin with the raw amino-acid sequence, 545 residues long: Cryptochrome-1 (545 aa).

A Photolyase/cryptochrome alpha/beta domain is found at Ile3 to Leu140. FAD-binding positions include Arg237, Ser265, Ser267, Gln308, His375, Asp407 to Asp409, Cys413, and Asn416.

The protein belongs to the DNA photolyase class-1 family. Interacts with tim and per; promoted by light conditions. FAD is required as a cofactor.

Its subcellular location is the cytoplasm. The protein resides in the perinuclear region. The protein localises to the nucleus. Functionally, blue light-dependent regulator that is the input of the circadian feedback loop. Has no photolyase activity for cyclobutane pyrimidine dimers or 6-4 photoproducts. Regulation of expression by light suggests a role in photoreception for locomotor activity rhythms. Functions, together with per, as a transcriptional repressor required for the oscillation of peripheral circadian clocks and for the correct specification of clock cells. Genes directly activated by the transcription factors Clock (Clk) and cycle (cyc) are repressed by cry. The polypeptide is Cryptochrome-1 (Anopheles gambiae (African malaria mosquito)).